A 231-amino-acid chain; its full sequence is 7-cyano-7-deazaguanine synthase (231 aa).

An ATP-binding site is contributed by phenylalanine 8–leucine 18. Zn(2+) contacts are provided by cysteine 188, cysteine 197, cysteine 200, and cysteine 203.

This sequence belongs to the QueC family. The cofactor is Zn(2+).

It carries out the reaction 7-carboxy-7-deazaguanine + NH4(+) + ATP = 7-cyano-7-deazaguanine + ADP + phosphate + H2O + H(+). It participates in purine metabolism; 7-cyano-7-deazaguanine biosynthesis. In terms of biological role, catalyzes the ATP-dependent conversion of 7-carboxy-7-deazaguanine (CDG) to 7-cyano-7-deazaguanine (preQ(0)). This chain is 7-cyano-7-deazaguanine synthase, found in Sodalis glossinidius (strain morsitans).